A 208-amino-acid chain; its full sequence is UPF0323 lipoprotein HH_0014 (208 aa).

Residues 1–26 (MKHIHKIKNYAMVGGLGVMAVFALNA) form the signal peptide. Residue cysteine 27 is the site of N-palmitoyl cysteine attachment. Cysteine 27 carries S-diacylglycerol cysteine lipidation. Residues 148–208 (ANSQRNYKSP…TNRNTGSMGS (61 aa)) are disordered. Low complexity-rich tracts occupy residues 169–185 (SAKT…SGKS) and 193–208 (SSQS…SMGS).

Belongs to the UPF0323 family.

It is found in the cell membrane. The protein is UPF0323 lipoprotein HH_0014 of Helicobacter hepaticus (strain ATCC 51449 / 3B1).